The sequence spans 450 residues: Molybdate-anion transporter (450 aa).

12 helical membrane-spanning segments follow: residues 1 to 21, 43 to 63, 79 to 99, 128 to 148, 174 to 194, 195 to 215, 249 to 269, 278 to 298, 311 to 331, 344 to 364, 376 to 396, and 409 to 429; these read MLVTAYLAFVGLLASCLGLEL, LDFYQVYFLALAADWLQAPYL, ILYVCGLASTVLFGLVASSLV, FVLLVGRALGGLSTALLFSAF, AAFWNHVLAVVAGVAAEAVAS, WIGLGPVAPFVAAIPLLALAG, VLLLGTIQALFESVIFIFVFL, GAPLGIVFSSFMAASLLGSSL, PMHLLSLAVLIVVFSLFMLTF, FIAFLLIELACGLYFPSMSFL, GVLNWFRVPLHLLACLGLLVL, and FSICSAVMVMALLAVVGLFTV.

This sequence belongs to the major facilitator superfamily.

It localises to the cell membrane. Its function is as follows. Mediates high-affinity intracellular uptake of the rare oligo-element molybdenum. In Pongo abelii (Sumatran orangutan), this protein is Molybdate-anion transporter (MFSD5).